A 118-amino-acid chain; its full sequence is uncharacterized protein (118 aa).

The signal sequence occupies residues 1–22 (MKMSYLRSGIVGFLAGASLSYA). A coiled-coil region spans residues 41–71 (TATEALETDKQLYKKIEKKIEELESSCVKKS).

This is an uncharacterized protein from Schizosaccharomyces pombe (strain 972 / ATCC 24843) (Fission yeast).